Consider the following 409-residue polypeptide: uncharacterized protein (409 aa).

Residues 1–26 (MKKELLASLVLCLSLSPLVSTNEVFA) form the signal peptide.

This is an uncharacterized protein from Bacillus subtilis (strain 168).